A 365-amino-acid chain; its full sequence is MPQNVILPGPAPWGFRLSGGIDFNQPLIITRITPGSKAAAANLCPGDVILAIDGYGTESMTHADAQDRIKAAAHQLCLKIDRAETRLWSPQVTEDGKAHPFKINLESEPQDVNYFEHKHNIRPKPFIIPGRSSGCSTPSGIDGGSGRSTPSSVSTLSTICPGDLKVAAKMAPNIPLEMELPGVKIVHAQFNTPMQLYSDDNIMETLQGQVSTALGETPSMSEPTTASVPPQSDVYRMLHDNRNEPTQPRQSGSFRVLQELVNDGPDDRPAGTRSVRAPVTKIHGGAGGTQKMPLCDKCGSGIVGAVVKARDKYRHPECFVCADCNLNLKQKGYFFVEGELYCETHARARMRPPEGYDTVTLYPKA.

Positions 1-84 (MPQNVILPGP…QLCLKIDRAE (84 aa)) constitute a PDZ domain. Ser18 bears the Phosphoserine mark. The segment at 126-156 (FIIPGRSSGCSTPSGIDGGSGRSTPSSVSTL) is disordered. A compositionally biased stretch (polar residues) spans 147–156 (RSTPSSVSTL). The LIM zinc-binding domain occupies 293–352 (PLCDKCGSGIVGAVVKARDKYRHPECFVCADCNLNLKQKGYFFVEGELYCETHARARMRP).

Interacts with ACTN2. Forms a heterodimer with PDLIM4 (via LIM domain).

It is found in the cytoplasm. The protein localises to the myofibril. Its subcellular location is the sarcomere. The protein resides in the z line. Its function is as follows. May play a role in the organization of actin filament arrays within muscle cells. The polypeptide is PDZ and LIM domain protein 3 (PDLIM3) (Sus scrofa (Pig)).